The sequence spans 524 residues: 2-isopropylmalate synthase (524 aa).

The region spanning 15 to 277 (VVIFDTTMRD…ETKIDTTHIT (263 aa)) is the Pyruvate carboxyltransferase domain. Mn(2+) is bound by residues D24, H212, H214, and N248. The segment at 401–524 (RVQRLRVVAG…RPEAAIASGF (124 aa)) is regulatory domain.

The protein belongs to the alpha-IPM synthase/homocitrate synthase family. LeuA type 1 subfamily. As to quaternary structure, homodimer. Mn(2+) is required as a cofactor.

The protein localises to the cytoplasm. The enzyme catalyses 3-methyl-2-oxobutanoate + acetyl-CoA + H2O = (2S)-2-isopropylmalate + CoA + H(+). It participates in amino-acid biosynthesis; L-leucine biosynthesis; L-leucine from 3-methyl-2-oxobutanoate: step 1/4. Its function is as follows. Catalyzes the condensation of the acetyl group of acetyl-CoA with 3-methyl-2-oxobutanoate (2-ketoisovalerate) to form 3-carboxy-3-hydroxy-4-methylpentanoate (2-isopropylmalate). This chain is 2-isopropylmalate synthase, found in Caulobacter sp. (strain K31).